Reading from the N-terminus, the 523-residue chain is UDP-glucuronosyltransferase 3A2 (523 aa).

The first 22 residues, 1–22 (MAGQRVLLLVGFLLPGVLLSEA), serve as a signal peptide directing secretion. Topologically, residues 23–483 (AKILTISTVG…YVFQQPWHEQ (461 aa)) are extracellular. A glycan (N-linked (GlcNAc...) asparagine) is linked at Asn-52. The chain crosses the membrane as a helical span at residues 484-504 (YLLDVFVFLLGLTLGTLWLCG). Residues 505 to 523 (KLLGMAVWWLRGARKVKET) lie on the Cytoplasmic side of the membrane.

It belongs to the UDP-glycosyltransferase family.

The protein localises to the membrane. It catalyses the reaction glucuronate acceptor + UDP-alpha-D-glucuronate = acceptor beta-D-glucuronoside + UDP + H(+). In terms of biological role, UDP-glucuronosyltransferases catalyze phase II biotransformation reactions in which lipophilic substrates are conjugated with glucuronic acid to increase water solubility and enhance excretion. They are of major importance in the conjugation and subsequent elimination of potentially toxic xenobiotics and endogenous compounds. The sequence is that of UDP-glucuronosyltransferase 3A2 (UGT3A2) from Homo sapiens (Human).